The chain runs to 503 residues: Arginyl-tRNA--protein transferase 1 (503 aa).

This sequence belongs to the R-transferase family.

Its subcellular location is the cytoplasm. It carries out the reaction an N-terminal L-alpha-aminoacyl-[protein] + L-arginyl-tRNA(Arg) = an N-terminal L-arginyl-L-aminoacyl-[protein] + tRNA(Arg) + H(+). In terms of biological role, involved in the post-translational conjugation of arginine to the N-terminal aspartate or glutamate of a protein. This arginylation is required for degradation of the protein via the ubiquitin pathway. Does not arginylate cysteine residues. This is Arginyl-tRNA--protein transferase 1 (ATE1) from Saccharomyces cerevisiae (strain ATCC 204508 / S288c) (Baker's yeast).